A 327-amino-acid chain; its full sequence is Glutaminase 1 (327 aa).

Substrate is bound by residues serine 74, asparagine 126, glutamate 170, asparagine 177, tyrosine 201, tyrosine 253, and valine 271.

Belongs to the glutaminase family. Homotetramer.

It carries out the reaction L-glutamine + H2O = L-glutamate + NH4(+). The chain is Glutaminase 1 (glsA1) from Bacillus subtilis (strain 168).